A 703-amino-acid polypeptide reads, in one-letter code: MTSRIRFLMCPPDHYDVDYVINPWMEGNIHKSSRDRAVEQWQGLYQILKEHAIVDLVTPQKGWPDLVFTANAGLVLGDNVVLSRFLHKERQGEEPYFKEWFEGNGYTVYELPKDLPFEGAGDALLDREGRWLWAGYGFRSELDSHPYLAKWLDIEVLSLRLIDERFYHLDTCFCPLANGYLLYYPGAFDSYSNRLIEMRVAPEKRIAIAEADAVNFACNTVNVESIVIMNKASDALKQSLTGVGFQVLETPLTEFLKAGGAAKCLTLRVTEPVRDEVHANVYVESRIIRIEGHLLDSGLINRALDMIVDTGGSFQVLNFNLGEQRQSTSAAEVKVSAPSHEVMEEIISLLIDLGAVDLPQDERDAKLEPVIQDGVAPDDFYVSTIYPTEVRINGQWIKVENQRMDGAIAITQTPNGLLAQCKILRDLKAGEQVIVDVLGIRTIRKTESREQRNTQEFSFMSGGVSSERRVELVVEQVAWELRKIRDAGGKVVVTAGPVVIHTGGGEHLSRLIREGYVQALLGGNAIAVHDIEQNMMGTSLGVDMKRGVAVRGGHRHHLKVINTIRRHGSIAKGVESGIIRSGVMYECVRNQIPFVLAGSIRDDGPLPDTQMDLIKAQEEYAKHLEGAEMILMLSSMLHSIGVGNMTPAGVKMVCVDINPAVVTKLSDRGSIESVGVVTDVGLFLSLLTQQLDKLTSPYVSKVG.

Positions 10 to 269 (CPPDHYDVDY…GAAKCLTLRV (260 aa)) are arginine dihydrolase. Residues asparagine 22, aspartate 65, asparagine 71, arginine 90, and arginine 139 each coordinate L-arginine. Residue asparagine 22 participates in L-ornithine binding. 3 residues coordinate L-ornithine: arginine 90, arginine 139, and histidine 168. Residue histidine 168 is the Proton donor/acceptor of the active site. Residues aspartate 170 and alanine 258 each coordinate L-arginine. Cysteine 264 contributes to the L-ornithine binding site. The active-site Nucleophile is the cysteine 264. The tract at residues 285 to 694 (SRIIRIEGHL…SLLTQQLDKL (410 aa)) is ornithine cyclodeaminase. Asparagine 524, alanine 525, aspartate 603, serine 635, methionine 636, leucine 637, histidine 638, aspartate 656, aspartate 679, and valine 680 together coordinate NAD(+).

This sequence in the N-terminal section; belongs to the DDAH family. In the C-terminal section; belongs to the AgrE/ArgZ ornithine cyclodeaminase family. Homotetramer. The cofactor is NAD(+).

It catalyses the reaction L-arginine + 2 H2O + 2 H(+) = L-ornithine + 2 NH4(+) + CO2. The catalysed reaction is L-ornithine = L-proline + NH4(+). Its activity is regulated as follows. Ornithine cyclodeaminase activity is inhibited by ATP. In terms of biological role, bifunctional enzyme involved in a cyanobacterial arginine utilization pathway that produces glutamate and enables cellular adaptation to nitrogen fluctuations. Catalyzes the hydrolysis of arginine to ornithine, with the release of ammonia and carbon dioxide. Then, catalyzes the conversion of ornithine to proline, with the release of ammonia. In Nostoc sp. (strain PCC 7120 / SAG 25.82 / UTEX 2576), this protein is Bifunctional arginine dihydrolase/ornithine cyclodeaminase AgrE.